A 316-amino-acid polypeptide reads, in one-letter code: Replication initiation protein (316 aa).

It belongs to the initiator RepB protein family.

This chain is Replication initiation protein (repA), found in Escherichia coli.